The following is a 528-amino-acid chain: Protein spinster homolog 1 (528 aa).

Residues 1-44 (MSGSDTAPFLSQADDTDDGPAPGTPGLPGSMGNPKSEDPAVPDQ) are disordered. The next 12 helical transmembrane spans lie at 50-70 (ITGL…YINL), 98-118 (GLIQ…FGYL), 126-146 (YLMC…SFIP), 160-180 (VGVG…DLFV), 187-207 (MLSV…IAGS), 218-238 (WALR…FLVV), 278-298 (LGFT…PAFL), 323-343 (LIFG…GVEI), 357-377 (LVCA…LACA), 381-401 (IVAT…NWAI), 421-441 (FQIV…IGSI), and 465-485 (MLCA…AIFI). A Phosphoserine modification is found at S518.

This sequence belongs to the major facilitator superfamily. Spinster (TC 2.A.1.49) family. Interacts with BCL2 and BCL2L1.

It localises to the lysosome membrane. The catalysed reaction is a 1-acyl-sn-glycero-3-phosphocholine(out) + H(+)(out) = a 1-acyl-sn-glycero-3-phosphocholine(in) + H(+)(in). The enzyme catalyses 1-hexadecanoyl-sn-glycero-3-phosphocholine(out) + H(+)(out) = 1-hexadecanoyl-sn-glycero-3-phosphocholine(in) + H(+)(in). It catalyses the reaction 1-(9Z-octadecenoyl)-sn-glycero-3-phosphocholine(out) + H(+)(out) = 1-(9Z-octadecenoyl)-sn-glycero-3-phosphocholine(in) + H(+)(in). It carries out the reaction 1-(5Z,8Z,11Z,14Z-eicosatetraenoyl)-sn-glycero-3-phosphocholine(out) + H(+)(out) = 1-(5Z,8Z,11Z,14Z-eicosatetraenoyl)-sn-glycero-3-phosphocholine(in) + H(+)(in). The catalysed reaction is 1-(4Z,7Z,10Z,13Z,16Z,19Z-docosahexaenoyl)-sn-glycero-3-phosphocholine(out) + H(+)(out) = 1-(4Z,7Z,10Z,13Z,16Z,19Z-docosahexaenoyl)-sn-glycero-3-phosphocholine(in) + H(+)(in). The enzyme catalyses a 1-acyl-sn-glycero-3-phosphoethanolamine(out) + H(+)(out) = a 1-acyl-sn-glycero-3-phosphoethanolamine(in) + H(+)(in). It catalyses the reaction 1-(9Z-octadecenoyl)-sn-glycero-3-phosphoethanolamine(out) + H(+)(out) = 1-(9Z-octadecenoyl)-sn-glycero-3-phosphoethanolamine(in) + H(+)(in). It carries out the reaction 1-acyl-sn-glycero-3-phospho-(1'-sn-glycerol)(out) + H(+)(out) = 1-acyl-sn-glycero-3-phospho-(1'-sn-glycerol)(in) + H(+)(in). The catalysed reaction is 1-(9Z-octadecenoyl)-sn-glycero-3-phospho-(1'-sn-glycerol)(out) + H(+)(out) = 1-(9Z-octadecenoyl)-sn-glycero-3-phospho-(1'-sn-glycerol)(in) + H(+)(in). The enzyme catalyses a 1-O-(1Z-alkenyl)-sn-glycero-3-phosphocholine(out) + H(+)(out) = a 1-O-(1Z-alkenyl)-sn-glycero-3-phosphocholine(in) + H(+)(in). It catalyses the reaction 1-(1Z-hexadecenyl)-sn-glycero-3-phosphocholine(out) + H(+)(out) = 1-(1Z-hexadecenyl)-sn-glycero-3-phosphocholine(in) + H(+)(in). It carries out the reaction a 1-O-(1Z-alkenyl)-sn-glycero-3-phosphoethanolamine(out) + H(+)(out) = a 1-O-(1Z-alkenyl)-sn-glycero-3-phosphoethanolamine(in) + H(+)(in). The catalysed reaction is 1-O-(1Z-hexadecenyl)-sn-glycero-3-phosphoethanolamine(out) + H(+)(out) = 1-O-(1Z-hexadecenyl)-sn-glycero-3-phosphoethanolamine(in) + H(+)(in). Plays a critical role in the phospholipid salvage pathway from lysosomes to the cytosol. Mediates the rate-limiting, proton-dependent, lysosomal efflux of lysophospholipids, which can then be reacylated by acyltransferases in the endoplasmic reticulum to form phospholipids. Selective for zwitterionic headgroups such as lysophosphatidylcholine (LPC) and lysophosphatidylethanolamine (LPE), can also transport lysophosphatidylglycerol (LPG), but not other anionic lysophospholipids, sphingosine, nor sphingomyelin. Transports lysophospholipids with saturated, monounsaturated, and polyunsaturated fatty acids, such as 1-hexadecanoyl-sn-glycero-3-phosphocholine, 1-(9Z-octadecenoyl)-sn-glycero-3-phosphocholine and 1-(4Z,7Z,10Z,13Z,16Z,19Z-docosahexaenoyl)-sn-glycero-3-phosphocholine, respectively. Can also transport lysoplasmalogen (LPC with a fatty alcohol) such as 1-(1Z-hexadecenyl)-sn-glycero-3-phosphocholine. Essential player in lysosomal homeostasis. Crucial for cell survival under conditions of nutrient limitation. May be involved in necrotic or autophagic cell death. This chain is Protein spinster homolog 1 (SPNS1), found in Bos taurus (Bovine).